Consider the following 356-residue polypeptide: Peptide chain release factor 1 (356 aa).

Residue Gln-233 is modified to N5-methylglutamine.

This sequence belongs to the prokaryotic/mitochondrial release factor family. Methylated by PrmC. Methylation increases the termination efficiency of RF1.

It localises to the cytoplasm. Its function is as follows. Peptide chain release factor 1 directs the termination of translation in response to the peptide chain termination codons UAG and UAA. The polypeptide is Peptide chain release factor 1 (Shouchella clausii (strain KSM-K16) (Alkalihalobacillus clausii)).